A 726-amino-acid chain; its full sequence is Catalase-peroxidase (726 aa).

A disordered region spans residues 1 to 33 (MSTTDDTHNTLSTGKCPFHQGGHDRSAGAGTAS). Residues 105–226 (WHGAGTYRSI…LGATEMGLIY (122 aa)) constitute a cross-link (tryptophyl-tyrosyl-methioninium (Trp-Tyr) (with M-252)). His106 (proton acceptor) is an active-site residue. Residues 226-252 (YVNPEGPDHSGEPLSAAAAIRATFGNM) constitute a cross-link (tryptophyl-tyrosyl-methioninium (Tyr-Met) (with W-105)). His267 is a heme b binding site.

The protein belongs to the peroxidase family. Peroxidase/catalase subfamily. Homodimer or homotetramer. Heme b is required as a cofactor. Formation of the three residue Trp-Tyr-Met cross-link is important for the catalase, but not the peroxidase activity of the enzyme.

The catalysed reaction is H2O2 + AH2 = A + 2 H2O. It carries out the reaction 2 H2O2 = O2 + 2 H2O. Bifunctional enzyme with both catalase and broad-spectrum peroxidase activity. The protein is Catalase-peroxidase of Salmonella choleraesuis (strain SC-B67).